Reading from the N-terminus, the 302-residue chain is Aspartate carbamoyltransferase catalytic subunit (302 aa).

Carbamoyl phosphate contacts are provided by arginine 55 and threonine 56. Position 83 (lysine 83) interacts with L-aspartate. Carbamoyl phosphate is bound by residues arginine 105, histidine 133, and glutamine 136. The L-aspartate site is built by arginine 166 and arginine 222. Carbamoyl phosphate is bound by residues glycine 262 and proline 263.

It belongs to the aspartate/ornithine carbamoyltransferase superfamily. ATCase family. In terms of assembly, heterododecamer (2C3:3R2) of six catalytic PyrB chains organized as two trimers (C3), and six regulatory PyrI chains organized as three dimers (R2).

It catalyses the reaction carbamoyl phosphate + L-aspartate = N-carbamoyl-L-aspartate + phosphate + H(+). It participates in pyrimidine metabolism; UMP biosynthesis via de novo pathway; (S)-dihydroorotate from bicarbonate: step 2/3. Catalyzes the condensation of carbamoyl phosphate and aspartate to form carbamoyl aspartate and inorganic phosphate, the committed step in the de novo pyrimidine nucleotide biosynthesis pathway. This chain is Aspartate carbamoyltransferase catalytic subunit, found in Solibacter usitatus (strain Ellin6076).